The following is a 185-amino-acid chain: MEGWDKGTKSVVGEIPLLSTRAGPRDGEAWRQRLKEEYRALIAYTSVNKSKDNDWFRISAANPEGTRWEGTCWYVHNLRRYEFPLQFDIPVAYPQVAPEIELPTLDGKTHKMYRGGKICLTVHFKPLWAKNCPRFGIAHALCLGLAPWLAAEVPILVDSGMVKHKDDEAAPADAAAAASGSAAAS.

Catalysis depends on Cys119, which acts as the Glycyl thioester intermediate.

This sequence belongs to the ubiquitin-conjugating enzyme family. UFC1 subfamily.

In terms of biological role, E2-like enzyme which forms an intermediate with UFM1 via a thioester linkage. This Oryza sativa subsp. japonica (Rice) protein is Ubiquitin-fold modifier-conjugating enzyme 1.